A 503-amino-acid polypeptide reads, in one-letter code: ATP synthase subunit alpha (503 aa).

G169 to T176 lines the ATP pocket.

This sequence belongs to the ATPase alpha/beta chains family. As to quaternary structure, F-type ATPases have 2 components, CF(1) - the catalytic core - and CF(0) - the membrane proton channel. CF(1) has five subunits: alpha(3), beta(3), gamma(1), delta(1), epsilon(1). CF(0) has three main subunits: a(1), b(2) and c(9-12). The alpha and beta chains form an alternating ring which encloses part of the gamma chain. CF(1) is attached to CF(0) by a central stalk formed by the gamma and epsilon chains, while a peripheral stalk is formed by the delta and b chains.

The protein resides in the cell membrane. The catalysed reaction is ATP + H2O + 4 H(+)(in) = ADP + phosphate + 5 H(+)(out). Its function is as follows. Produces ATP from ADP in the presence of a proton gradient across the membrane. The alpha chain is a regulatory subunit. The protein is ATP synthase subunit alpha of Lactobacillus johnsonii (strain CNCM I-12250 / La1 / NCC 533).